An 86-amino-acid polypeptide reads, in one-letter code: Anti-adapter protein IraP (86 aa).

Residues 1 to 36 (MKNLIAELLLKLAQKEEESKELCAQVEALEIIVTAM) adopt a coiled-coil conformation.

It belongs to the IraP family. In terms of assembly, interacts with RssB.

It localises to the cytoplasm. Inhibits RpoS proteolysis by regulating RssB activity, thereby increasing the stability of the sigma stress factor RpoS especially during phosphate starvation, but also in stationary phase and during nitrogen starvation. Its effect on RpoS stability is due to its interaction with RssB, which probably blocks the interaction of RssB with RpoS, and the consequent delivery of the RssB-RpoS complex to the ClpXP protein degradation pathway. This Shigella boydii serotype 4 (strain Sb227) protein is Anti-adapter protein IraP.